Reading from the N-terminus, the 372-residue chain is Histidinol-phosphate aminotransferase (372 aa).

Lys-234 is subject to N6-(pyridoxal phosphate)lysine.

The protein belongs to the class-II pyridoxal-phosphate-dependent aminotransferase family. Histidinol-phosphate aminotransferase subfamily. As to quaternary structure, homodimer. Pyridoxal 5'-phosphate serves as cofactor.

It carries out the reaction L-histidinol phosphate + 2-oxoglutarate = 3-(imidazol-4-yl)-2-oxopropyl phosphate + L-glutamate. Its pathway is amino-acid biosynthesis; L-histidine biosynthesis; L-histidine from 5-phospho-alpha-D-ribose 1-diphosphate: step 7/9. This is Histidinol-phosphate aminotransferase (hisC) from Corynebacterium efficiens (strain DSM 44549 / YS-314 / AJ 12310 / JCM 11189 / NBRC 100395).